A 419-amino-acid chain; its full sequence is Transcription termination factor Rho (419 aa).

The Rho RNA-BD domain occupies 48 to 123; the sequence is DIFGDGVLEI…LKVNAVNYDK (76 aa). 3 RNA-binding regions span residues 61–66, 78–80, and 108–110; these read GFGFLR, DIY, and ERY. ATP is bound by residues 169 to 174, 181 to 186, and Arg-212; these read GRGQRG and KAGKTI. The segment at 284–288 is RNA-binding 2; sequence VLTGG.

The protein belongs to the Rho family. As to quaternary structure, homohexamer. The homohexamer assembles into an open ring structure.

Facilitates transcription termination by a mechanism that involves Rho binding to the nascent RNA, activation of Rho's RNA-dependent ATPase activity, and release of the mRNA from the DNA template. This chain is Transcription termination factor Rho, found in Buchnera aphidicola subsp. Schizaphis graminum (strain Sg).